Here is a 196-residue protein sequence, read N- to C-terminus: ATP-dependent Clp protease proteolytic subunit (196 aa).

Serine 98 serves as the catalytic Nucleophile. The active site involves histidine 123.

This sequence belongs to the peptidase S14 family. As to quaternary structure, fourteen ClpP subunits assemble into 2 heptameric rings which stack back to back to give a disk-like structure with a central cavity, resembling the structure of eukaryotic proteasomes.

The protein resides in the cytoplasm. The catalysed reaction is Hydrolysis of proteins to small peptides in the presence of ATP and magnesium. alpha-casein is the usual test substrate. In the absence of ATP, only oligopeptides shorter than five residues are hydrolyzed (such as succinyl-Leu-Tyr-|-NHMec, and Leu-Tyr-Leu-|-Tyr-Trp, in which cleavage of the -Tyr-|-Leu- and -Tyr-|-Trp bonds also occurs).. Its function is as follows. Cleaves peptides in various proteins in a process that requires ATP hydrolysis. Has a chymotrypsin-like activity. Plays a major role in the degradation of misfolded proteins. ClpXP is involved in the complete degradation of the Site-2 clipped anti-sigma-W factor RsiW. This results in the release of SigW and the transcription activation of the genes under the control of the sigma-W factor. The sequence is that of ATP-dependent Clp protease proteolytic subunit from Geobacillus kaustophilus (strain HTA426).